The primary structure comprises 221 residues: Beta-phosphoglucomutase (221 aa).

Asp8 acts as the Nucleophile in catalysis. Mg(2+) contacts are provided by Asp8 and Asp10. The residue at position 8 (Asp8) is a 4-aspartylphosphate. The active-site Proton donor/acceptor is the Asp10. Beta-D-glucose 6-phosphate-binding residues include Asp10, Gly46, Val47, Arg49, Ser116, Lys117, and Asn118. Asp170 is a Mg(2+) binding site.

It belongs to the HAD-like hydrolase superfamily. CbbY/CbbZ/Gph/YieH family. As to quaternary structure, monomer. Mg(2+) is required as a cofactor. In terms of processing, autophosphorylated.

It is found in the cytoplasm. It carries out the reaction beta-D-glucose 1-phosphate = beta-D-glucose 6-phosphate. Its activity is regulated as follows. Activated by phosphorylation. Competitively inhibited by alpha-D-galactose-1-phosphate. Its function is as follows. Catalyzes the interconversion of D-glucose 1-phosphate (G1P) and D-glucose 6-phosphate (G6P), forming beta-D-glucose 1,6-(bis)phosphate (beta-G16P) as an intermediate. The beta-phosphoglucomutase (Beta-PGM) acts on the beta-C(1) anomer of G1P. Glucose or lactose are used in preference to maltose, which is only utilized after glucose or lactose has been exhausted. It plays a key role in the regulation of the flow of carbohydrate intermediates in glycolysis and the formation of the sugar nucleotide UDP-glucose. This chain is Beta-phosphoglucomutase, found in Lactococcus lactis subsp. lactis (strain IL1403) (Streptococcus lactis).